The primary structure comprises 432 residues: Adenylosuccinate synthetase (432 aa).

Residues 13–19 (GDEGKGK) and 41–43 (GHT) each bind GTP. Residue Asp14 is the Proton acceptor of the active site. Mg(2+) contacts are provided by Asp14 and Gly41. IMP contacts are provided by residues 14–17 (DEGK), 39–42 (NAGH), Thr130, Arg144, Gln225, Thr240, and Arg304. His42 functions as the Proton donor in the catalytic mechanism. Substrate is bound at residue 300 to 306 (ATTGRKR). GTP-binding positions include Arg306, 332-334 (KLD), and 415-417 (STG).

This sequence belongs to the adenylosuccinate synthetase family. As to quaternary structure, homodimer. Requires Mg(2+) as cofactor.

The protein resides in the cytoplasm. It carries out the reaction IMP + L-aspartate + GTP = N(6)-(1,2-dicarboxyethyl)-AMP + GDP + phosphate + 2 H(+). It functions in the pathway purine metabolism; AMP biosynthesis via de novo pathway; AMP from IMP: step 1/2. Plays an important role in the de novo pathway of purine nucleotide biosynthesis. Catalyzes the first committed step in the biosynthesis of AMP from IMP. This Photobacterium profundum (strain SS9) protein is Adenylosuccinate synthetase.